Here is a 698-residue protein sequence, read N- to C-terminus: Endogenous retrovirus group K member 21 Env polyprotein (698 aa).

Positions 1–25 (MHPSEMQRKAPPRRRRHRNRAPLTH) are disordered. Residues 1-88 (MHPSEMQRKA…ALMIVSMVVS (88 aa)) form the signal peptide. The segment covering 10 to 20 (APPRRRRHRNR) has biased composition (basic residues). The Extracellular portion of the chain corresponds to 89 to 631 (LPMPAGAAAA…NLNPVTWVKT (543 aa)). Asn99, Asn127, Asn152, Asn273, Asn354, Asn371, and Asn460 each carry an N-linked (GlcNAc...) asparagine glycan. The segment at 465-485 (FIFTLIAVIMGLIAVTAMAAV) is fusion peptide. Residues Asn506, Asn553, Asn565, and Asn584 are each glycosylated (N-linked (GlcNAc...) asparagine). A helical membrane pass occupies residues 632–652 (IGSTTIINLILILVCLFCLLL). Residues 653–698 (VCRCTQQLRRDSDHRERAMMTMVVLSKRKGGNVGKSKRDQIVTVSV) are Cytoplasmic-facing.

This sequence belongs to the beta type-B retroviral envelope protein family. HERV class-II K(HML-2) env subfamily. As to quaternary structure, the surface (SU) and transmembrane (TM) proteins form a heterodimer. SU and TM are attached by noncovalent interactions or by a labile interchain disulfide bond. In terms of processing, specific enzymatic cleavages in vivo yield the mature SU and TM proteins.

It localises to the cell membrane. The protein resides in the virion. Retroviral envelope proteins mediate receptor recognition and membrane fusion during early infection. Endogenous envelope proteins may have kept, lost or modified their original function during evolution. This endogenous envelope protein has lost its original fusogenic properties. In terms of biological role, SU mediates receptor recognition. Functionally, TM anchors the envelope heterodimer to the viral membrane through one transmembrane domain. The other hydrophobic domain, called fusion peptide, mediates fusion of the viral membrane with the target cell membrane. This Homo sapiens (Human) protein is Endogenous retrovirus group K member 21 Env polyprotein (ERVK-21).